The primary structure comprises 465 residues: Respiratory transcription factor ZNF1 (465 aa).

A DNA-binding region (zn(2)-C6 fungal-type) is located at residues 8–34 (CDCCCIRRVKCDRKKPCKCCLQHNLQC).

It belongs to the MAL13 family.

Its subcellular location is the nucleus. Its function is as follows. Transcription factor that regulates respiratory growth and plays a critical role in stress adaptation during non-fermentative growth. Binds to promoters of genes involved in non-fermentative metabolism, including processes such as gluconeogenesis (PCK1, FBP1 and MDH2), glyoxylate shunt (MLS1 and ICL1) and the tricarboxylic acid cycle (ACO1). Plays a role in maintaining mitochondrial morphology and function. Also plays a role in tolerance to pH and osmotic stress, especially during the oxidative metabolism. This chain is Respiratory transcription factor ZNF1, found in Saccharomyces cerevisiae (strain ATCC 204508 / S288c) (Baker's yeast).